Reading from the N-terminus, the 363-residue chain is Succinyl-diaminopimelate desuccinylase (363 aa).

H63 is a Zn(2+) binding site. Residue D65 is part of the active site. D94 contributes to the Zn(2+) binding site. Residue E123 is the Proton acceptor of the active site. Residues E124, E152, and H337 each contribute to the Zn(2+) site.

Belongs to the peptidase M20A family. DapE subfamily. Homodimer. It depends on Zn(2+) as a cofactor. Requires Co(2+) as cofactor.

The catalysed reaction is N-succinyl-(2S,6S)-2,6-diaminopimelate + H2O = (2S,6S)-2,6-diaminopimelate + succinate. Its pathway is amino-acid biosynthesis; L-lysine biosynthesis via DAP pathway; LL-2,6-diaminopimelate from (S)-tetrahydrodipicolinate (succinylase route): step 3/3. In terms of biological role, catalyzes the hydrolysis of N-succinyl-L,L-diaminopimelic acid (SDAP), forming succinate and LL-2,6-diaminopimelate (DAP), an intermediate involved in the bacterial biosynthesis of lysine and meso-diaminopimelic acid, an essential component of bacterial cell walls. This Campylobacter concisus (strain 13826) protein is Succinyl-diaminopimelate desuccinylase.